A 118-amino-acid polypeptide reads, in one-letter code: Large ribosomal subunit protein bL19 (118 aa).

The protein belongs to the bacterial ribosomal protein bL19 family.

Functionally, this protein is located at the 30S-50S ribosomal subunit interface and may play a role in the structure and function of the aminoacyl-tRNA binding site. The chain is Large ribosomal subunit protein bL19 (rplS) from Helicobacter pylori (strain J99 / ATCC 700824) (Campylobacter pylori J99).